A 253-amino-acid chain; its full sequence is Probable U3 small nucleolar RNA-associated protein 11 (253 aa).

The interval 1-26 (MAAAFRKAAKSRQREHRERSQPGFRK) is disordered. Residues K74, K83, and K86 each participate in a glycyl lysine isopeptide (Lys-Gly) (interchain with G-Cter in SUMO2) cross-link. Position 90 is a phosphothreonine (T90). Residues K103, K120, K143, K144, K180, K211, K218, K235, and K236 each participate in a glycyl lysine isopeptide (Lys-Gly) (interchain with G-Cter in SUMO2) cross-link. S241 bears the Phosphoserine mark. A Glycyl lysine isopeptide (Lys-Gly) (interchain with G-Cter in SUMO2) cross-link involves residue K246.

It belongs to the UTP11 family. As to quaternary structure, part of the small subunit (SSU) processome, composed of more than 70 proteins and the RNA chaperone small nucleolar RNA (snoRNA) U3.

The protein localises to the nucleus. It is found in the nucleolus. Functionally, part of the small subunit (SSU) processome, first precursor of the small eukaryotic ribosomal subunit. During the assembly of the SSU processome in the nucleolus, many ribosome biogenesis factors, an RNA chaperone and ribosomal proteins associate with the nascent pre-rRNA and work in concert to generate RNA folding, modifications, rearrangements and cleavage as well as targeted degradation of pre-ribosomal RNA by the RNA exosome. Involved in nucleolar processing of pre-18S ribosomal RNA. In Homo sapiens (Human), this protein is Probable U3 small nucleolar RNA-associated protein 11.